We begin with the raw amino-acid sequence, 179 residues long: Cell division protein ZapC (179 aa).

Belongs to the ZapC family. As to quaternary structure, interacts directly with FtsZ.

The protein resides in the cytoplasm. Functionally, contributes to the efficiency of the cell division process by stabilizing the polymeric form of the cell division protein FtsZ. Acts by promoting interactions between FtsZ protofilaments and suppressing the GTPase activity of FtsZ. This chain is Cell division protein ZapC, found in Ferrimonas balearica (strain DSM 9799 / CCM 4581 / KCTC 23876 / PAT).